We begin with the raw amino-acid sequence, 272 residues long: Bifunctional protein FolD 2 (272 aa).

NADP(+) is bound by residues 157 to 159, Thr182, and Ile223; that span reads GRS.

Belongs to the tetrahydrofolate dehydrogenase/cyclohydrolase family. Homodimer.

The catalysed reaction is (6R)-5,10-methylene-5,6,7,8-tetrahydrofolate + NADP(+) = (6R)-5,10-methenyltetrahydrofolate + NADPH. It carries out the reaction (6R)-5,10-methenyltetrahydrofolate + H2O = (6R)-10-formyltetrahydrofolate + H(+). Its pathway is one-carbon metabolism; tetrahydrofolate interconversion. Its function is as follows. Catalyzes the oxidation of 5,10-methylenetetrahydrofolate to 5,10-methenyltetrahydrofolate and then the hydrolysis of 5,10-methenyltetrahydrofolate to 10-formyltetrahydrofolate. In Syntrophomonas wolfei subsp. wolfei (strain DSM 2245B / Goettingen), this protein is Bifunctional protein FolD 2.